Reading from the N-terminus, the 580-residue chain is Multidrug resistance-like ATP-binding protein MdlB (580 aa).

Residues 25–310 enclose the ABC transmembrane type-1 domain; sequence IILAFFLLLS…ITIQQSILQQ (286 aa). 5 helical membrane-spanning segments follow: residues 26–46, 61–81, 142–162, 165–185, and 258–278; these read ILAF…PILI, FQLI…AVFF, VGPT…AMFT, WHMA…MSIY, and LLSA…SIGV. The ABC transporter domain occupies 341–575; the sequence is INIKNLSFKY…KGFYWKMYNF (235 aa). Residue 375–382 participates in ATP binding; that stretch reads GQTGSGKS.

This sequence belongs to the ABC transporter superfamily. Drug exporter-2 (TC 3.A.1.117) family.

Its subcellular location is the cell membrane. The enzyme catalyses ATP + H2O + xenobioticSide 1 = ADP + phosphate + xenobioticSide 2.. The protein is Multidrug resistance-like ATP-binding protein MdlB (mdlB) of Buchnera aphidicola subsp. Schizaphis graminum (strain Sg).